We begin with the raw amino-acid sequence, 219 residues long: Phosphatidylserine decarboxylase proenzyme (219 aa).

The Schiff-base intermediate with substrate; via pyruvic acid role is filled by Ser188. The residue at position 188 (Ser188) is a Pyruvic acid (Ser); by autocatalysis.

This sequence belongs to the phosphatidylserine decarboxylase family. PSD-A subfamily. Heterodimer of a large membrane-associated beta subunit and a small pyruvoyl-containing alpha subunit. Requires pyruvate as cofactor. Post-translationally, is synthesized initially as an inactive proenzyme. Formation of the active enzyme involves a self-maturation process in which the active site pyruvoyl group is generated from an internal serine residue via an autocatalytic post-translational modification. Two non-identical subunits are generated from the proenzyme in this reaction, and the pyruvate is formed at the N-terminus of the alpha chain, which is derived from the carboxyl end of the proenzyme. The post-translation cleavage follows an unusual pathway, termed non-hydrolytic serinolysis, in which the side chain hydroxyl group of the serine supplies its oxygen atom to form the C-terminus of the beta chain, while the remainder of the serine residue undergoes an oxidative deamination to produce ammonia and the pyruvoyl prosthetic group on the alpha chain.

Its subcellular location is the cell membrane. The catalysed reaction is a 1,2-diacyl-sn-glycero-3-phospho-L-serine + H(+) = a 1,2-diacyl-sn-glycero-3-phosphoethanolamine + CO2. Its pathway is phospholipid metabolism; phosphatidylethanolamine biosynthesis; phosphatidylethanolamine from CDP-diacylglycerol: step 2/2. Catalyzes the formation of phosphatidylethanolamine (PtdEtn) from phosphatidylserine (PtdSer). This Ruegeria pomeroyi (strain ATCC 700808 / DSM 15171 / DSS-3) (Silicibacter pomeroyi) protein is Phosphatidylserine decarboxylase proenzyme.